Here is an 88-residue protein sequence, read N- to C-terminus: Small ribosomal subunit protein bS20 (88 aa).

Residues 1-27 (MANSKTAKKRAIQSEKRRQHNASRRSM) are disordered.

This sequence belongs to the bacterial ribosomal protein bS20 family.

In terms of biological role, binds directly to 16S ribosomal RNA. This is Small ribosomal subunit protein bS20 from Shewanella amazonensis (strain ATCC BAA-1098 / SB2B).